The chain runs to 73 residues: Translation initiation factor IF-1 3 (73 aa).

In terms of domain architecture, S1-like spans 1–72 (MAKEELVEFG…TKGRINYRHK (72 aa)).

The protein belongs to the IF-1 family. Component of the 30S ribosomal translation pre-initiation complex which assembles on the 30S ribosome in the order IF-2 and IF-3, IF-1 and N-formylmethionyl-tRNA(fMet); mRNA recruitment can occur at any time during PIC assembly.

It localises to the cytoplasm. One of the essential components for the initiation of protein synthesis. Stabilizes the binding of IF-2 and IF-3 on the 30S subunit to which N-formylmethionyl-tRNA(fMet) subsequently binds. Helps modulate mRNA selection, yielding the 30S pre-initiation complex (PIC). Upon addition of the 50S ribosomal subunit IF-1, IF-2 and IF-3 are released leaving the mature 70S translation initiation complex. This chain is Translation initiation factor IF-1 3, found in Cupriavidus pinatubonensis (strain JMP 134 / LMG 1197) (Cupriavidus necator (strain JMP 134)).